The primary structure comprises 100 residues: Urease subunit gamma (100 aa).

This sequence belongs to the urease gamma subunit family. Heterotrimer of UreA (gamma), UreB (beta) and UreC (alpha) subunits. Three heterotrimers associate to form the active enzyme.

The protein localises to the cytoplasm. It catalyses the reaction urea + 2 H2O + H(+) = hydrogencarbonate + 2 NH4(+). Its pathway is nitrogen metabolism; urea degradation; CO(2) and NH(3) from urea (urease route): step 1/1. This is Urease subunit gamma from Methylibium petroleiphilum (strain ATCC BAA-1232 / LMG 22953 / PM1).